A 1334-amino-acid chain; its full sequence is Aldehyde oxidase 3 (1334 aa).

In terms of domain architecture, 2Fe-2S ferredoxin-type spans aspartate 8–isoleucine 95. [2Fe-2S] cluster-binding residues include cysteine 47, cysteine 52, cysteine 55, and cysteine 77. Glutamine 116 lines the Mo-molybdopterin pocket. Positions 117, 120, 152, and 154 each coordinate [2Fe-2S] cluster. An FAD-binding PCMH-type domain is found at phenylalanine 236–lysine 421. Leucine 264–leucine 271 is a binding site for FAD. Serine 320 is subject to Phosphoserine. Positions 354, 358, 367, and 411 each coordinate FAD. Residues glycine 801, leucine 1042, and glutamine 1198 each contribute to the Mo-molybdopterin site. Glutamate 1265 (proton acceptor; for azaheterocycle hydroxylase activity) is an active-site residue.

It belongs to the xanthine dehydrogenase family. As to quaternary structure, homodimer. [2Fe-2S] cluster serves as cofactor. FAD is required as a cofactor. The cofactor is Mo-molybdopterin.

The protein localises to the cytoplasm. The enzyme catalyses an aldehyde + O2 + H2O = a carboxylate + H2O2 + H(+). Oxidase with broad substrate specificity, oxidizing aromatic azaheterocycles, such as N1-methylnicotinamide and phthalazine, as well as aldehydes, such as benzaldehyde, retinal and pyridoxal. Plays a key role in the metabolism of xenobiotics and drugs containing aromatic azaheterocyclic substituents. Is probably involved in the regulation of reactive oxygen species homeostasis. Is a prominent source of superoxide generation via the one-electron reduction of molecular oxygen. Also catalyzes nitric oxide (NO) production; under anaerobic conditions, reduces nitrite to NO with NADH or aldehyde as electron donor, but under aerobic conditions, NADH is the preferred substrate. These reactions may be catalyzed by several isozymes. This Rattus norvegicus (Rat) protein is Aldehyde oxidase 3 (Aox3).